Here is a 207-residue protein sequence, read N- to C-terminus: MTSPVRILGIDPGLRRTGWGLITAQGTKLTYGDCGVVTSDGELPLALRLRELFEGIGRIVEAVRPDEVAVEETFVNKDAQATLKLGHARAMALLVPALAGLPVFEYAPNLIKKTVAGSGHAEKVQIQAMVRFLLPKAEFRVADAADALAIAITHASHRDAHALRQAHLPGGKRRSLTGQAAAGQGLAGKGFSAAAAARIEAALAKQG.

Active-site residues include D11, E71, and D143. Residues D11, E71, and D143 each contribute to the Mg(2+) site.

This sequence belongs to the RuvC family. Homodimer which binds Holliday junction (HJ) DNA. The HJ becomes 2-fold symmetrical on binding to RuvC with unstacked arms; it has a different conformation from HJ DNA in complex with RuvA. In the full resolvosome a probable DNA-RuvA(4)-RuvB(12)-RuvC(2) complex forms which resolves the HJ. The cofactor is Mg(2+).

The protein localises to the cytoplasm. It carries out the reaction Endonucleolytic cleavage at a junction such as a reciprocal single-stranded crossover between two homologous DNA duplexes (Holliday junction).. The RuvA-RuvB-RuvC complex processes Holliday junction (HJ) DNA during genetic recombination and DNA repair. Endonuclease that resolves HJ intermediates. Cleaves cruciform DNA by making single-stranded nicks across the HJ at symmetrical positions within the homologous arms, yielding a 5'-phosphate and a 3'-hydroxyl group; requires a central core of homology in the junction. The consensus cleavage sequence is 5'-(A/T)TT(C/G)-3'. Cleavage occurs on the 3'-side of the TT dinucleotide at the point of strand exchange. HJ branch migration catalyzed by RuvA-RuvB allows RuvC to scan DNA until it finds its consensus sequence, where it cleaves and resolves the cruciform DNA. The protein is Crossover junction endodeoxyribonuclease RuvC of Methylobacterium radiotolerans (strain ATCC 27329 / DSM 1819 / JCM 2831 / NBRC 15690 / NCIMB 10815 / 0-1).